Reading from the N-terminus, the 612-residue chain is Threonine--tRNA ligase (612 aa).

The catalytic stretch occupies residues 218 to 509; the sequence is DHRKLGVELG…LSEHFGGNFP (292 aa). Residues cysteine 310, histidine 361, and histidine 486 each coordinate Zn(2+).

It belongs to the class-II aminoacyl-tRNA synthetase family. As to quaternary structure, homodimer. It depends on Zn(2+) as a cofactor.

The protein resides in the cytoplasm. The catalysed reaction is tRNA(Thr) + L-threonine + ATP = L-threonyl-tRNA(Thr) + AMP + diphosphate + H(+). Its function is as follows. Catalyzes the attachment of threonine to tRNA(Thr) in a two-step reaction: L-threonine is first activated by ATP to form Thr-AMP and then transferred to the acceptor end of tRNA(Thr). Also edits incorrectly charged L-seryl-tRNA(Thr). The chain is Threonine--tRNA ligase from Helicobacter pylori (strain ATCC 700392 / 26695) (Campylobacter pylori).